We begin with the raw amino-acid sequence, 269 residues long: Hemin import ATP-binding protein HmuV (269 aa).

The ABC transporter domain occupies 5 to 242; that stretch reads LDAEAASFAI…SLIRRVFDIA (238 aa). ATP is bound at residue 37 to 44; the sequence is GPNGAGKS.

Belongs to the ABC transporter superfamily. Heme (hemin) importer (TC 3.A.1.14.5) family. In terms of assembly, the complex is composed of two ATP-binding proteins (HmuV), two transmembrane proteins (HmuU) and a solute-binding protein (HmuT).

It localises to the cell inner membrane. Part of the ABC transporter complex HmuTUV involved in hemin import. Responsible for energy coupling to the transport system. The sequence is that of Hemin import ATP-binding protein HmuV from Rhodopseudomonas palustris (strain BisB18).